Consider the following 1201-residue polypeptide: Vitamin B12-dependent ribonucleotide reductase (1201 aa).

Substrate contacts are provided by residues Ser153, Ala198–Cys199, Gly230, Asn482–Glu486, and Pro683–Ile687. An intrachain disulfide couples Cys199 to Cys495. The active-site Proton acceptor is the Asn482. Catalysis depends on Cys484, which acts as the Cysteine radical intermediate. Glu486 functions as the Proton acceptor in the catalytic mechanism. Basic and acidic residues predominate over residues Asp1100–Thr1118. The interval Asp1100 to Ser1120 is disordered.

The protein belongs to the ribonucleoside diphosphate reductase class-2 family. Adenosylcob(III)alamin is required as a cofactor.

It catalyses the reaction a 2'-deoxyribonucleoside 5'-diphosphate + [thioredoxin]-disulfide + H2O = a ribonucleoside 5'-diphosphate + [thioredoxin]-dithiol. Its function is as follows. Catalyzes the reduction of ribonucleotides to deoxyribonucleotides. May function to provide a pool of deoxyribonucleotide precursors for DNA repair during oxygen limitation and/or for immediate growth after restoration of oxygen. The polypeptide is Vitamin B12-dependent ribonucleotide reductase (nrdJ) (Leptospira interrogans serogroup Icterohaemorrhagiae serovar copenhageni (strain Fiocruz L1-130)).